Consider the following 662-residue polypeptide: 72 kDa type IV collagenase (662 aa).

A signal peptide spans methionine 1–alanine 29. The propeptide at alanine 30–asparagine 109 is activation peptide. The Cysteine switch motif lies at proline 100–valine 107. Cysteine 102 is a binding site for Zn(2+). Positions tyrosine 110–valine 221 are collagenase-like 1. The Ca(2+) site is built by aspartate 134 and aspartate 168. 2 residues coordinate Zn(2+): histidine 178 and aspartate 180. Ca(2+)-binding residues include aspartate 185 and glycine 186. Zn(2+) is bound at residue histidine 193. Residues glycine 200, glycine 202, and aspartate 204 each coordinate Ca(2+). Histidine 206 lines the Zn(2+) pocket. 3 residues coordinate Ca(2+): aspartate 208, aspartate 209, and glutamate 211. The tract at residues arginine 222–serine 396 is collagen-binding. 3 Fibronectin type-II domains span residues alanine 228–histidine 276, alanine 286–glutamate 334, and serine 344–aspartate 392. Cystine bridges form between cysteine 233-cysteine 259, cysteine 247-cysteine 274, cysteine 291-cysteine 317, cysteine 305-cysteine 332, cysteine 349-cysteine 375, and cysteine 363-cysteine 390. A collagenase-like 2 region spans residues leucine 397–threonine 467. Histidine 403 contributes to the Zn(2+) binding site. Glutamate 404 is an active-site residue. Zn(2+) is bound by residues histidine 407 and histidine 413. Residues serine 414 to cysteine 662 are required for inhibitor TIMP2 binding. The interval glycine 446–proline 465 is disordered. Cysteine 471 and cysteine 662 are oxidised to a cystine. Hemopexin repeat units lie at residues aspartate 474–leucine 518, proline 519–proline 565, valine 567–isoleucine 615, and proline 616–cysteine 662. Ca(2+) contacts are provided by aspartate 478, aspartate 523, and aspartate 571. Asparagine 575 carries an N-linked (GlcNAc...) asparagine glycan. Aspartate 620 serves as a coordination point for Ca(2+). The N-linked (GlcNAc...) asparagine glycan is linked to asparagine 644.

This sequence belongs to the peptidase M10A family. Interacts (via the C-terminal hemopexin-like domains-containing region) with the integrin alpha-V/beta-3; the interaction promotes vascular invasion in angiogenic vessels and melamoma cells. Interacts (via the C-terminal PEX domain) with TIMP2 (via the C-terminal); the interaction inhibits the degradation activity. Interacts with GSK3B. Ca(2+) serves as cofactor. The cofactor is Zn(2+). In terms of processing, phosphorylation on multiple sites modulates enzymatic activity. Phosphorylated by PKC in vitro. The propeptide is processed by MMP14 (MT-MMP1) and MMP16 (MT-MMP3). Autocatalytic cleavage in the C-terminal produces the anti-angiogenic peptide, PEX. This processing appears to be facilitated by binding integrinv/beta3.

The protein resides in the secreted. The protein localises to the extracellular space. Its subcellular location is the extracellular matrix. It is found in the membrane. It localises to the nucleus. The protein resides in the cytoplasm. The protein localises to the mitochondrion. The enzyme catalyses Cleavage of gelatin type I and collagen types IV, V, VII, X. Cleaves the collagen-like sequence Pro-Gln-Gly-|-Ile-Ala-Gly-Gln.. Its function is as follows. Ubiquitinous metalloproteinase that is involved in diverse functions such as remodeling of the vasculature, angiogenesis, tissue repair, tumor invasion, inflammation, and atherosclerotic plaque rupture. As well as degrading extracellular matrix proteins, can also act on several nonmatrix proteins such as big endothelial 1 and beta-type CGRP promoting vasoconstriction. Also cleaves KISS at a Gly-|-Leu bond. Appears to have a role in myocardial cell death pathways. Contributes to myocardial oxidative stress by regulating the activity of GSK3beta. Cleaves GSK3beta in vitro. Involved in the formation of the fibrovascular tissues. Functionally, PEX, the C-terminal non-catalytic fragment of MMP2, possesses anti-angiogenic and anti-tumor properties and inhibits cell migration and cell adhesion to FGF2 and vitronectin. Ligand for integrin alpha-v/beta-3 on the surface of blood vessels. Mediates the proteolysis of CHUK/IKKA and initiates a primary innate immune response by inducing mitochondrial-nuclear stress signaling with activation of the pro-inflammatory NF-kappaB, NFAT and IRF transcriptional pathways. This Mus musculus (Mouse) protein is 72 kDa type IV collagenase (Mmp2).